Reading from the N-terminus, the 373-residue chain is Alpha-N-acetylgalactosaminide alpha-2,6-sialyltransferase 2 (373 aa).

The Cytoplasmic portion of the chain corresponds to 1–6 (MDLPRR). The helical; Signal-anchor for type II membrane protein transmembrane segment at 7–27 (WLFRMLLLVATSSGILLMLYS) threads the bilayer. At 28–373 (SAGQQSPETQ…NAGILWLYQR (346 aa)) the chain is on the lumenal side. Intrachain disulfides connect Cys-65/Cys-147 and Cys-150/Cys-316. N-linked (GlcNAc...) asparagine glycosylation is present at Asn-103. A CMP-N-acetyl-beta-neuraminate-binding site is contributed by Asn-155. Asn-160 carries N-linked (GlcNAc...) asparagine glycosylation. CMP-N-acetyl-beta-neuraminate-binding residues include Asn-178, Ser-303, and His-335.

The protein belongs to the glycosyltransferase 29 family. Highly expressed in lactating mammary gland and adult testis. Lower levels in kidney.

The protein localises to the golgi apparatus membrane. The enzyme catalyses a beta-D-galactosyl-(1-&gt;3)-N-acetyl-alpha-D-galactosaminyl derivative + CMP-N-acetyl-beta-neuraminate = a beta-D-galactosyl-(1-&gt;3)-[N-acetyl-alpha-neuraminyl-(2-&gt;6)]-N-acetyl-alpha-D-galactosaminyl derivative + CMP + H(+). It carries out the reaction a 3-O-[N-acetyl-alpha-D-galactosaminyl]-L-threonyl-[protein] + CMP-N-acetyl-beta-neuraminate = a 3-O-[N-acetyl-alpha-neuraminosyl-(2-&gt;6)-N-acetyl-alpha-D-galactosaminyl]-L-threonyl-[protein] + CMP + H(+). It catalyses the reaction a 3-O-[N-acetyl-alpha-neuraminyl-(2-&gt;3)-beta-D-galactosyl-(1-&gt;3)-N-acetyl-alpha-D-galactosaminyl]-L-threonyl-[protein] + CMP-N-acetyl-beta-neuraminate = a 3-O-{alpha-Neu5Ac-(2-&gt;3)-beta-D-Gal-(1-&gt;3)-[alpha-Neu5Ac-(2-&gt;6)]-alpha-D-GalNAc}-L-threonyl-[protein] + CMP + H(+). It participates in protein modification; protein glycosylation. Its function is as follows. Catalyzes the transfer of N-acetylneuraminyl groups onto glycan chains in glycoproteins. Conjugates sialic acid with an alpha-2-6 linkage to N-acetylgalactosamine (GalNAc) glycan chains linked to serine or threonine in glycoproteins. Sialylates alphaGalNAc- and Galbeta1-&gt;3GalNAc-O-Ser/Thr epitopes also known as Tn and T antigens. This Mus musculus (Mouse) protein is Alpha-N-acetylgalactosaminide alpha-2,6-sialyltransferase 2 (St6galnac2).